A 220-amino-acid polypeptide reads, in one-letter code: Glutathione S-transferase 2 (220 aa).

In terms of domain architecture, GST N-terminal spans 2–88 (VVTLGYWDIR…YIARKHNMCG (87 aa)). Glutathione-binding positions include 7 to 8 (YW), 43 to 46 (PSDW), Lys-50, 59 to 60 (NL), and 72 to 73 (QS). Positions 90-208 (TEVEKQRVDV…RSGRFMKAPI (119 aa)) constitute a GST C-terminal domain. A substrate-binding site is contributed by Tyr-116.

It belongs to the GST superfamily. Mu family. As to quaternary structure, homodimer.

The protein localises to the cytoplasm. The enzyme catalyses RX + glutathione = an S-substituted glutathione + a halide anion + H(+). Its function is as follows. Conjugation of reduced glutathione to a wide number of exogenous and endogenous hydrophobic electrophiles. Participates in the formation of novel hepoxilin regioisomers. In Gallus gallus (Chicken), this protein is Glutathione S-transferase 2 (GSTM2).